Consider the following 280-residue polypeptide: Succinate dehydrogenase [ubiquinone] iron-sulfur subunit, mitochondrial (280 aa).

The transit peptide at 1–25 directs the protein to the mitochondrion; that stretch reads MAAVCFSLSRCCSAVHRPAVTAVRF. The 2Fe-2S ferredoxin-type domain maps to 39 to 129; it reads KKFQIYRWDP…TSKVTKIYPL (91 aa). [2Fe-2S] cluster-binding residues include cysteine 92, cysteine 97, cysteine 100, and cysteine 112. Residues 175–205 form the 4Fe-4S ferredoxin-type domain; it reads DRQKLDGLYECILCACCSTSCPSYWWNADKY. [4Fe-4S] cluster-binding residues include cysteine 185, cysteine 188, and cysteine 191. Cysteine 195 lines the [3Fe-4S] cluster pocket. A ubiquinone is bound at residue tryptophan 200. [3Fe-4S] cluster-binding residues include cysteine 242 and cysteine 248. Position 252 (cysteine 252) interacts with [4Fe-4S] cluster.

This sequence belongs to the succinate dehydrogenase/fumarate reductase iron-sulfur protein family. In terms of assembly, component of complex II composed of four subunits: the flavoprotein (FP) sdha, iron-sulfur protein (IP) sdhb, and a cytochrome b composed of sdhc and sdhd. The cofactor is [2Fe-2S] cluster. Requires [3Fe-4S] cluster as cofactor. [4Fe-4S] cluster is required as a cofactor.

It localises to the mitochondrion inner membrane. The catalysed reaction is a quinone + succinate = fumarate + a quinol. It carries out the reaction (R)-malate + a quinone = enol-oxaloacetate + a quinol. It catalyses the reaction (S)-malate + a quinone = enol-oxaloacetate + a quinol. The protein operates within carbohydrate metabolism; tricarboxylic acid cycle; fumarate from succinate (eukaryal route): step 1/1. With respect to regulation, enol-oxaloacetate inhibits the succinate dehydrogenase activity. Iron-sulfur protein (IP) subunit of the succinate dehydrogenase complex (mitochondrial respiratory chain complex II), responsible for transferring electrons from succinate to ubiquinone (coenzyme Q). SDH also oxidizes malate to the non-canonical enol form of oxaloacetate, enol-oxaloacetate. Enol-oxaloacetate, which is a potent inhibitor of the succinate dehydrogenase activity, is further isomerized into keto-oxaloacetate. This is Succinate dehydrogenase [ubiquinone] iron-sulfur subunit, mitochondrial (sdhb) from Danio rerio (Zebrafish).